Here is a 157-residue protein sequence, read N- to C-terminus: 6,7-dimethyl-8-ribityllumazine synthase 2 (157 aa).

Residues Trp-21, 55–57, and 79–81 each bind 5-amino-6-(D-ribitylamino)uracil; these read AYE and FVV. The Proton donor role is filled by Arg-87. Ser-112 is a binding site for 5-amino-6-(D-ribitylamino)uracil. His-126 contacts (2S)-2-hydroxy-3-oxobutyl phosphate.

The protein belongs to the DMRL synthase family. In terms of assembly, homodecamer, arranged as a dimer of pentamers.

The enzyme catalyses (2S)-2-hydroxy-3-oxobutyl phosphate + 5-amino-6-(D-ribitylamino)uracil = 6,7-dimethyl-8-(1-D-ribityl)lumazine + phosphate + 2 H2O + H(+). It functions in the pathway cofactor biosynthesis; riboflavin biosynthesis; riboflavin from 2-hydroxy-3-oxobutyl phosphate and 5-amino-6-(D-ribitylamino)uracil: step 1/2. Functionally, catalyzes the formation of 6,7-dimethyl-8-ribityllumazine by condensation of 5-amino-6-(D-ribitylamino)uracil with 3,4-dihydroxy-2-butanone 4-phosphate. This is the penultimate step in the biosynthesis of riboflavin. The chain is 6,7-dimethyl-8-ribityllumazine synthase 2 (ribH2) from Mesorhizobium japonicum (strain LMG 29417 / CECT 9101 / MAFF 303099) (Mesorhizobium loti (strain MAFF 303099)).